Here is a 634-residue protein sequence, read N- to C-terminus: 1-deoxy-D-xylulose-5-phosphate synthase (634 aa).

Thiamine diphosphate-binding positions include His-74 and 115-117; that span reads AHS. Residue Asp-146 participates in Mg(2+) binding. Residues 147–148, Asn-176, Tyr-283, and Glu-365 contribute to the thiamine diphosphate site; that span reads GA. Residue Asn-176 coordinates Mg(2+).

The protein belongs to the transketolase family. DXPS subfamily. Homodimer. Mg(2+) serves as cofactor. The cofactor is thiamine diphosphate.

The catalysed reaction is D-glyceraldehyde 3-phosphate + pyruvate + H(+) = 1-deoxy-D-xylulose 5-phosphate + CO2. It participates in metabolic intermediate biosynthesis; 1-deoxy-D-xylulose 5-phosphate biosynthesis; 1-deoxy-D-xylulose 5-phosphate from D-glyceraldehyde 3-phosphate and pyruvate: step 1/1. Functionally, catalyzes the acyloin condensation reaction between C atoms 2 and 3 of pyruvate and glyceraldehyde 3-phosphate to yield 1-deoxy-D-xylulose-5-phosphate (DXP). The chain is 1-deoxy-D-xylulose-5-phosphate synthase from Burkholderia lata (strain ATCC 17760 / DSM 23089 / LMG 22485 / NCIMB 9086 / R18194 / 383).